Consider the following 252-residue polypeptide: Phosphate import ATP-binding protein PstB (252 aa).

One can recognise an ABC transporter domain in the interval 6–247; it reads IDTRDVNFWY…PEKEATQNYI (242 aa). Position 38-45 (38-45) interacts with ATP; the sequence is GPSGCGKS.

This sequence belongs to the ABC transporter superfamily. Phosphate importer (TC 3.A.1.7) family. The complex is composed of two ATP-binding proteins (PstB), two transmembrane proteins (PstC and PstA) and a solute-binding protein (PstS).

The protein localises to the cell inner membrane. The catalysed reaction is phosphate(out) + ATP + H2O = ADP + 2 phosphate(in) + H(+). Part of the ABC transporter complex PstSACB involved in phosphate import. Responsible for energy coupling to the transport system. This chain is Phosphate import ATP-binding protein PstB, found in Bacteroides thetaiotaomicron (strain ATCC 29148 / DSM 2079 / JCM 5827 / CCUG 10774 / NCTC 10582 / VPI-5482 / E50).